Consider the following 229-residue polypeptide: Putative N-acetylmannosamine-6-phosphate 2-epimerase (229 aa).

It belongs to the NanE family.

It catalyses the reaction an N-acyl-D-glucosamine 6-phosphate = an N-acyl-D-mannosamine 6-phosphate. The protein operates within amino-sugar metabolism; N-acetylneuraminate degradation; D-fructose 6-phosphate from N-acetylneuraminate: step 3/5. In terms of biological role, converts N-acetylmannosamine-6-phosphate (ManNAc-6-P) to N-acetylglucosamine-6-phosphate (GlcNAc-6-P). The sequence is that of Putative N-acetylmannosamine-6-phosphate 2-epimerase from Shigella dysenteriae serotype 1 (strain Sd197).